The primary structure comprises 274 residues: 3-methyl-2-oxobutanoate hydroxymethyltransferase (274 aa).

Mg(2+) contacts are provided by aspartate 49 and aspartate 88. Residues 49–50 (DS), aspartate 88, and lysine 118 each bind 3-methyl-2-oxobutanoate. Glutamate 120 contacts Mg(2+). Residue glutamate 187 is the Proton acceptor of the active site.

This sequence belongs to the PanB family. Homodecamer; pentamer of dimers. Mg(2+) is required as a cofactor.

The protein localises to the cytoplasm. It catalyses the reaction 3-methyl-2-oxobutanoate + (6R)-5,10-methylene-5,6,7,8-tetrahydrofolate + H2O = 2-dehydropantoate + (6S)-5,6,7,8-tetrahydrofolate. It participates in cofactor biosynthesis; (R)-pantothenate biosynthesis; (R)-pantoate from 3-methyl-2-oxobutanoate: step 1/2. Catalyzes the reversible reaction in which hydroxymethyl group from 5,10-methylenetetrahydrofolate is transferred onto alpha-ketoisovalerate to form ketopantoate. The sequence is that of 3-methyl-2-oxobutanoate hydroxymethyltransferase from Parvibaculum lavamentivorans (strain DS-1 / DSM 13023 / NCIMB 13966).